Here is a 396-residue protein sequence, read N- to C-terminus: Serine/threonine-protein kinase 32A (396 aa).

Glycine 2 is lipidated: N-myristoyl glycine. One can recognise a Protein kinase domain in the interval 23-281; sequence FEILRAIGKG…LSDVQNFPYM (259 aa). ATP-binding positions include 29–37 and lysine 52; that span reads IGKGSFGKV. The Proton acceptor role is filled by aspartate 146. The disordered stretch occupies residues 373-396; sequence KRQPNLALEQTKDPQGEDGQNNNL.

Belongs to the protein kinase superfamily. Ser/Thr protein kinase family. The cofactor is Mg(2+).

It localises to the cell membrane. The catalysed reaction is L-seryl-[protein] + ATP = O-phospho-L-seryl-[protein] + ADP + H(+). The enzyme catalyses L-threonyl-[protein] + ATP = O-phospho-L-threonyl-[protein] + ADP + H(+). In Homo sapiens (Human), this protein is Serine/threonine-protein kinase 32A (STK32A).